We begin with the raw amino-acid sequence, 404 residues long: Argininosuccinate synthase (404 aa).

ATP is bound by residues alanine 12–serine 20 and alanine 39. Residues tyrosine 90 and serine 95 each coordinate L-citrulline. Glycine 120 is an ATP binding site. Residues threonine 122, asparagine 126, and aspartate 127 each contribute to the L-aspartate site. Asparagine 126 provides a ligand contact to L-citrulline. L-citrulline contacts are provided by arginine 130, serine 181, serine 190, glutamate 266, and tyrosine 278.

It belongs to the argininosuccinate synthase family. Type 1 subfamily. As to quaternary structure, homotetramer.

The protein resides in the cytoplasm. The enzyme catalyses L-citrulline + L-aspartate + ATP = 2-(N(omega)-L-arginino)succinate + AMP + diphosphate + H(+). The protein operates within amino-acid biosynthesis; L-arginine biosynthesis; L-arginine from L-ornithine and carbamoyl phosphate: step 2/3. The polypeptide is Argininosuccinate synthase (Rhodospirillum rubrum (strain ATCC 11170 / ATH 1.1.1 / DSM 467 / LMG 4362 / NCIMB 8255 / S1)).